The following is a 413-amino-acid chain: Multifunctional CCA protein (413 aa).

G8 and R11 together coordinate ATP. Residues G8 and R11 each coordinate CTP. D21 and D23 together coordinate Mg(2+). Residues R91, R137, and R140 each coordinate ATP. Residues R91, R137, and R140 each contribute to the CTP site. Positions 228-329 constitute an HD domain; the sequence is TGIHTLMTLS…VKLFDNIDAW (102 aa).

This sequence belongs to the tRNA nucleotidyltransferase/poly(A) polymerase family. Bacterial CCA-adding enzyme type 1 subfamily. As to quaternary structure, monomer. Can also form homodimers and oligomers. Requires Mg(2+) as cofactor. The cofactor is Ni(2+).

It catalyses the reaction a tRNA precursor + 2 CTP + ATP = a tRNA with a 3' CCA end + 3 diphosphate. The catalysed reaction is a tRNA with a 3' CCA end + 2 CTP + ATP = a tRNA with a 3' CCACCA end + 3 diphosphate. Functionally, catalyzes the addition and repair of the essential 3'-terminal CCA sequence in tRNAs without using a nucleic acid template. Adds these three nucleotides in the order of C, C, and A to the tRNA nucleotide-73, using CTP and ATP as substrates and producing inorganic pyrophosphate. tRNA 3'-terminal CCA addition is required both for tRNA processing and repair. Also involved in tRNA surveillance by mediating tandem CCA addition to generate a CCACCA at the 3' terminus of unstable tRNAs. While stable tRNAs receive only 3'-terminal CCA, unstable tRNAs are marked with CCACCA and rapidly degraded. The protein is Multifunctional CCA protein of Enterobacter sp. (strain 638).